We begin with the raw amino-acid sequence, 578 residues long: Probable ATP-dependent RNA helicase DDX55 homolog (578 aa).

Positions 7–37 (PVALKTFREKLGPELLEVFDKSYKSFTDVQV) match the Q motif motif. A Helicase ATP-binding domain is found at 40-218 (GTHLLNLSDV…VFGLRNAKQV (179 aa)). 53–60 (SPTGSGKT) serves as a coordination point for ATP. The DEAD box signature appears at 166–169 (DEAD). Residues 231–393 (TLKNYYVECR…EIKVPTNNSR (163 aa)) form the Helicase C-terminal domain. Residues 507–557 (AAKDKKRREKEARKLKKMGGRFRNGGGTGRKAEEKKALKRKAEEEDDAQND) are disordered. Residues 510 to 526 (DKKRREKEARKLKKMGG) show a composition bias toward basic residues. A compositionally biased stretch (basic and acidic residues) spans 536-549 (RKAEEKKALKRKAE).

Belongs to the DEAD box helicase family. DDX55/SPB4 subfamily.

The enzyme catalyses ATP + H2O = ADP + phosphate + H(+). Functionally, probable ATP-binding RNA helicase. The polypeptide is Probable ATP-dependent RNA helicase DDX55 homolog (Caenorhabditis elegans).